We begin with the raw amino-acid sequence, 431 residues long: Fibrinogen C domain-containing protein 1 (431 aa).

The Cytoplasmic portion of the chain corresponds to 1 to 3; the sequence is MLC. The helical; Signal-anchor for type II membrane protein transmembrane segment at 4–24 threads the bilayer; sequence TVLLALAVLLAVAVTGAVLFL. Residues 25 to 431 lie on the Extracellular side of the membrane; the sequence is NHTHTPGTAP…MKIRPVREDR (407 aa). The region spanning 205 to 428 is the Fibrinogen C-terminal domain; sequence CATGSRPRDC…FSEMKIRPVR (224 aa). A disulfide bridge connects residues C214 and C243. N310 carries N-linked (GlcNAc...) asparagine glycosylation. Residues D363 and D365 each contribute to the Ca(2+) site. The cysteines at positions 371 and 384 are disulfide-linked.

As to quaternary structure, homotetramer; disulfide-linked.

The protein resides in the membrane. Functionally, acetyl group-binding receptor which shows a high-affinity and calcium-dependent binding to acetylated structures such as chitin, some N-acetylated carbohydrates, and amino acids, but not to their non-acetylated counterparts. Can facilitate the endocytosis of acetylated components. The protein is Fibrinogen C domain-containing protein 1 (FIBCD1) of Macaca fascicularis (Crab-eating macaque).